Here is a 360-residue protein sequence, read N- to C-terminus: G-protein coupled receptor 15 (360 aa).

The Extracellular portion of the chain corresponds to 1 to 33; the sequence is MDPEETSVYLDYYYATSPNPDIRETHSHVPYTS. The chain crosses the membrane as a helical span at residues 34 to 54; the sequence is VFLPVFYIAVFLTGVLGNLVL. Residues 55–69 lie on the Cytoplasmic side of the membrane; it reads MGALHFKPGSRRLID. A helical transmembrane segment spans residues 70–90; that stretch reads IFIINLAASDFIFLVTLPLWV. Residues 91–120 lie on the Extracellular side of the membrane; it reads DKEASLGLWRTGSFLCKGSSYMISVNMHCS. A helical transmembrane segment spans residues 121–141; the sequence is VFLLTCMSVDRYLAIVCPVVS. Residues 142–149 are Cytoplasmic-facing; that stretch reads RKFRRTDC. A helical transmembrane segment spans residues 150–170; sequence AYVVCASIWFISCLLGLPTLL. Residues 171 to 192 lie on the Extracellular side of the membrane; that stretch reads SRELTLIDDKPYCAEKKATPLK. A helical membrane pass occupies residues 193 to 213; the sequence is LIWSLVALIFTFFVPLLSIVT. The Cytoplasmic portion of the chain corresponds to 214–239; the sequence is CYCRIARKLCAHYQQSGKHNKKLKKS. Residues 240–260 traverse the membrane as a helical segment; sequence IKIIFIVVAAFLVSWLPFNTS. Over 261–284 the chain is Extracellular; the sequence is KLLAIVSGLQQERYFPSAILQLGM. A helical transmembrane segment spans residues 285–305; sequence EVSGPLAFANSCVNPFIYYIF. The Cytoplasmic segment spans residues 306 to 360; that stretch reads DSYIRRAIVHCLCPCLKNYDFGSSTETSDSHLTKALSTFIHAEDFTRRRKRSVSL. Serine 359 carries the post-translational modification Phosphoserine.

It belongs to the G-protein coupled receptor 1 family. Interacts with adapter YWHAE; this interaction promotes ER-to-Golgi transport of GPR15. In terms of processing, phosphorylation is necessary for YWHAE binding and efficient surface expression. Post-translationally, O-glycosylated. Sialylated O-glycans in the N-terminal tail inhibits binding of GPR15LG. Sulfation is required for efficient binding of GPR15LG.

Its subcellular location is the cell membrane. G protein-coupled receptor that plays an important role in immune homeostasis. Acts via its natural ligand GPR15LG, a chemokine-like polypeptide strongly expressed in gastrointestinal tissues. GPR15-GPR15LG signaling axis regulates intestinal homeostasis and inflammation through the migration of immune cells. Controls thereby the specific homing of T-cells, particularly FOXP3+ regulatory T-cells (Tregs), to the large intestine lamina propria. Also required for skin localization of thymus-derived dendritic epidermal T-cells. Plays an important role in mediating cytoprotective function as well as angiogenesis of thrombomodulin. Mechanistically, preferentially signals through the Gi/o pathway to inhibit adenylate cyclase activity and activate a phosphatidylinositol-calcium second messenger system that regulates the release of Ca(2+) ions from intracellular stores. The chain is G-protein coupled receptor 15 (GPR15) from Chlorocebus aethiops (Green monkey).